The chain runs to 191 residues: Large ribosomal subunit protein uL6 (191 aa).

The protein belongs to the universal ribosomal protein uL6 family. Component of the large ribosomal subunit. Mature ribosomes consist of a small (40S) and a large (60S) subunit. The 40S subunit contains about 32 different proteins and 1 molecule of RNA (18S). The 60S subunit contains 45 different proteins and 3 molecules of RNA (25S, 5.8S and 5S).

It localises to the cytoplasm. Component of the ribosome, a large ribonucleoprotein complex responsible for the synthesis of proteins in the cell. The small ribosomal subunit (SSU) binds messenger RNAs (mRNAs) and translates the encoded message by selecting cognate aminoacyl-transfer RNA (tRNA) molecules. The large subunit (LSU) contains the ribosomal catalytic site termed the peptidyl transferase center (PTC), which catalyzes the formation of peptide bonds, thereby polymerizing the amino acids delivered by tRNAs into a polypeptide chain. The nascent polypeptides leave the ribosome through a tunnel in the LSU and interact with protein factors that function in enzymatic processing, targeting, and the membrane insertion of nascent chains at the exit of the ribosomal tunnel. This Candida albicans (strain SC5314 / ATCC MYA-2876) (Yeast) protein is Large ribosomal subunit protein uL6.